The following is a 311-amino-acid chain: Malate dehydrogenase (311 aa).

Residues 7-12 and Asp-32 contribute to the NAD(+) site; that span reads GAGNVG. The substrate site is built by Arg-82 and Arg-88. NAD(+) contacts are provided by residues Asn-95 and 118–120; that span reads VSN. Substrate-binding residues include Asn-120 and Arg-151. The active-site Proton acceptor is His-175.

Belongs to the LDH/MDH superfamily. MDH type 3 family. As to quaternary structure, homotetramer.

It catalyses the reaction (S)-malate + NAD(+) = oxaloacetate + NADH + H(+). Strongly inhibited by iodoacetic acid and CuCl(2). Completely inhibited by N-ethylmaleimide and HgCl(2). Catalyzes the reversible oxidation of malate to oxaloacetate. Can use both NAD and NADP for malate oxidation, but NADPH cannot be used for oxaloacetate reduction. The sequence is that of Malate dehydrogenase from Flavobacterium frigidimaris.